Reading from the N-terminus, the 518-residue chain is Zinc finger protein 449 (518 aa).

One can recognise an SCAN box domain in the interval 30–112 (RQRFRQFQYR…SLIEDLQREL (83 aa)). The segment covering 292 to 304 (NPTLGETPENSNL) has biased composition (polar residues). The disordered stretch occupies residues 292–325 (NPTLGETPENSNLEEPLNPKPHKKKSPGEKPHRC). C2H2-type zinc fingers lie at residues 323 to 345 (HRCPQCGKCFARKSQLTGHQRIH), 351 to 373 (HKCPECGKRFLRSSDLYRHQRLH), 379 to 401 (YECTVCKKRFTRRSHLIGHQRTH), 407 to 429 (YKCLECGKSFCHGSSLKRHLKTH), 435 to 457 (HRCHNCGKSFSRLTALTLHQRTH), 463 to 485 (FKCNYCGKSFRQRPSLVIHLRIH), and 491 to 513 (YKCTHCSKSFRQRAGLIMHQVTH).

Belongs to the krueppel C2H2-type zinc-finger protein family.

Its subcellular location is the nucleus. Functionally, may be involved in transcriptional regulation. This chain is Zinc finger protein 449 (ZNF449), found in Pan troglodytes (Chimpanzee).